The primary structure comprises 205 residues: uncharacterized protein (205 aa).

Active-site charge relay system residues include Ser-119 and His-160.

Belongs to the peptidase S51 family.

This is an uncharacterized protein from Listeria monocytogenes serovar 1/2a (strain ATCC BAA-679 / EGD-e).